The following is a 312-amino-acid chain: Pantothenate kinase (312 aa).

97 to 104 (GSVAVGKS) is a binding site for ATP.

The protein belongs to the prokaryotic pantothenate kinase family.

The protein localises to the cytoplasm. The enzyme catalyses (R)-pantothenate + ATP = (R)-4'-phosphopantothenate + ADP + H(+). The protein operates within cofactor biosynthesis; coenzyme A biosynthesis; CoA from (R)-pantothenate: step 1/5. The protein is Pantothenate kinase of Mycolicibacterium gilvum (strain PYR-GCK) (Mycobacterium gilvum (strain PYR-GCK)).